We begin with the raw amino-acid sequence, 530 residues long: Autoinducer-2 kinase (530 aa).

Belongs to the FGGY kinase family.

The protein resides in the cytoplasm. The enzyme catalyses (S)-4,5-dihydroxypentane-2,3-dione + ATP = (2S)-2-hydroxy-3,4-dioxopentyl phosphate + ADP + H(+). In terms of biological role, catalyzes the phosphorylation of autoinducer-2 (AI-2) to phospho-AI-2, which subsequently inactivates the transcriptional regulator LsrR and leads to the transcription of the lsr operon. Phosphorylates the ring-open form of (S)-4,5-dihydroxypentane-2,3-dione (DPD), which is the precursor to all AI-2 signaling molecules, at the C5 position. In Escherichia coli (strain ATCC 8739 / DSM 1576 / NBRC 3972 / NCIMB 8545 / WDCM 00012 / Crooks), this protein is Autoinducer-2 kinase.